A 403-amino-acid chain; its full sequence is Probable eukaryotic initiation factor 4A (403 aa).

The disordered stretch occupies residues 1–29 (MSQQDRVAPQDQDSFLDDQPGVRPIPSFD). The Q motif signature appears at 26–54 (PSFDDMPLHQNLLRGIYSYGFEKPSSIQQ). Residues 57-230 (IAPFTRGGDI…KKFMRDPVRI (174 aa)) form the Helicase ATP-binding domain. 70–77 (AQSGTGKT) is a binding site for ATP. The short motif at 178–181 (DEAD) is the DEAD box element. Positions 241 to 401 (GIKQFFIAVE…ELPVDFAAYL (161 aa)) constitute a Helicase C-terminal domain.

Belongs to the DEAD box helicase family. eIF4A subfamily. In terms of assembly, eIF4F is a multi-subunit complex, the composition of which varies with external and internal environmental conditions. It is composed of at least EIF4A, EIF4E and EIF4G.

It catalyses the reaction ATP + H2O = ADP + phosphate + H(+). Its function is as follows. ATP-dependent RNA helicase which is a subunit of the eIF4F complex involved in cap recognition and is required for mRNA binding to ribosome. In the current model of translation initiation, eIF4A unwinds RNA secondary structures in the 5'-UTR of mRNAs which is necessary to allow efficient binding of the small ribosomal subunit, and subsequent scanning for the initiator codon. This is Probable eukaryotic initiation factor 4A from Leishmania braziliensis.